The primary structure comprises 157 residues: MKEIVLAGGCFWGVEEYISRIQGIVKTKVGYANGTKENPSYEEVCSGVTRHAEACYIKYDESIISLEELLNKFWSIIDPTVLNKQGNDRGTQYRTGIFYLDEKDLNLIIKSKSQEKKNYRKPIVTEVEPLKCFYEAEEYHQKYLKKNPGGYCHIHLD.

Residue Cys-10 is part of the active site.

It belongs to the MsrA Met sulfoxide reductase family.

The catalysed reaction is L-methionyl-[protein] + [thioredoxin]-disulfide + H2O = L-methionyl-(S)-S-oxide-[protein] + [thioredoxin]-dithiol. It carries out the reaction [thioredoxin]-disulfide + L-methionine + H2O = L-methionine (S)-S-oxide + [thioredoxin]-dithiol. In terms of biological role, has an important function as a repair enzyme for proteins that have been inactivated by oxidation. Catalyzes the reversible oxidation-reduction of methionine sulfoxide in proteins to methionine. This Clostridium botulinum (strain Loch Maree / Type A3) protein is Peptide methionine sulfoxide reductase MsrA.